We begin with the raw amino-acid sequence, 527 residues long: MHDKILILDFGSQVTQLIARRIREAHVLSEIHPHDVSDEFIRDFKPTGIILSGGPNSVTETDTPRAPQAVFEAGVPVLGICYGMQTMAEQLGGKVDSGHLREFGYAEVRARNHTSFLDGIQDFATPEGHGMLKVWMSHGDKVLEMPQGFQLMASTESCPIAAMADETRHFYGVQWHPEVTHTVQGRAMLERFVLKICGAKPDWEMGNYIDEAVENIRKQVGDEHVILGLSGGVDSSVAAALLHRAIGDQLTCVFVDHGLLRLNEAEQVMSMFADNLGVKVIHVDASEAFMSKLKGVTDPEAKRKIIGAEFVEVFQTEAGKLTDAKWLAQGTIYPDVIESAGKGKKAAHTIKSHHNVGGLPETLNLKLLEPLRELFKDEVRELGVKLGLPPSMVYRHPFPGPGLGVRILGEVKREYADLLRRADAIFIESLRTFIDKDTDKSWYDLTSQAFAVFLPVKSVGVMGDGRTYEYVVALRAVQTLDFMTAHWAHLPHDLLGHVSNRIINEVRGINRVVYDISGKPPATIEWE.

The Glutamine amidotransferase type-1 domain occupies Lys-4–Asp-202. Cys-81 acts as the Nucleophile in catalysis. Residues His-176 and Glu-178 contribute to the active site. A GMPS ATP-PPase domain is found at Trp-203–Arg-395. Ser-230–Ser-236 serves as a coordination point for ATP.

Homodimer.

It carries out the reaction XMP + L-glutamine + ATP + H2O = GMP + L-glutamate + AMP + diphosphate + 2 H(+). It functions in the pathway purine metabolism; GMP biosynthesis; GMP from XMP (L-Gln route): step 1/1. Its function is as follows. Catalyzes the synthesis of GMP from XMP. The sequence is that of GMP synthase [glutamine-hydrolyzing] from Paraburkholderia phymatum (strain DSM 17167 / CIP 108236 / LMG 21445 / STM815) (Burkholderia phymatum).